The following is a 291-amino-acid chain: Phytanoyl-CoA dioxygenase domain-containing protein 1 (291 aa).

Thr-55 is subject to Phosphothreonine. 2-oxoglutarate-binding positions include Lys-102, Met-141, 156-158, and Trp-174; that span reads HQD. 2 residues coordinate Fe cation: His-156 and Asp-158. His-246 contributes to the Fe cation binding site. The 2-oxoglutarate site is built by Ser-248 and Arg-257.

Belongs to the PhyH family. PHYHD1 subfamily. Fe cation serves as cofactor.

Functionally, 2-oxoglutarate(2OG)-dependent dioxygenase that catalyzes the conversion of 2-oxoglutarate to succinate and CO(2) in an iron-dependent manner. However, does not couple 2OG turnover to the hydroxylation of acyl-coenzyme A derivatives, implying that it is not directly involved in phytanoyl coenzyme-A metabolism. Does not show detectable activity towards fatty acid CoA thioesters. In Mus musculus (Mouse), this protein is Phytanoyl-CoA dioxygenase domain-containing protein 1.